A 194-amino-acid polypeptide reads, in one-letter code: 7-methyl-GTP pyrophosphatase (194 aa).

The active-site Proton acceptor is the aspartate 69.

It belongs to the Maf family. YceF subfamily. Requires a divalent metal cation as cofactor.

The protein localises to the cytoplasm. The enzyme catalyses N(7)-methyl-GTP + H2O = N(7)-methyl-GMP + diphosphate + H(+). In terms of biological role, nucleoside triphosphate pyrophosphatase that hydrolyzes 7-methyl-GTP (m(7)GTP). May have a dual role in cell division arrest and in preventing the incorporation of modified nucleotides into cellular nucleic acids. The sequence is that of 7-methyl-GTP pyrophosphatase (yceF1) from Shigella boydii serotype 4 (strain Sb227).